The primary structure comprises 662 residues: Probable actin-related protein 8 (662 aa).

Basic and acidic residues-rich tracts occupy residues 50–59 (AGEKDAKETE) and 67–77 (TKQDDSKKSQV). A disordered region spans residues 50 to 92 (AGEKDAKETESESANGDTKQDDSKKSQVEEEEDGIEESELGEE). Residues 78-89 (EEEEDGIEESEL) show a composition bias toward acidic residues. 339-342 (DMGA) lines the ATP pocket.

It belongs to the actin family. Component of the chromatin remodeling Ino80 complex. Exists as monomers and dimers, but the dimer is most probably the biologically relevant form required for stable interactions with histones that exploits the twofold symmetry of the nucleosome core.

The protein resides in the nucleus. Functionally, probably involved in transcription regulation via its interaction with the INO80 complex, a chromatin remodeling complex. Exhibits low basal ATPase activity, and unable to polymerize. Strongly prefer nucleosomes and H3-H4 tetramers over H2A-H2B dimers, suggesting it may act as a nucleosome recognition module within the complex. In Schizosaccharomyces pombe (strain 972 / ATCC 24843) (Fission yeast), this protein is Probable actin-related protein 8.